The chain runs to 365 residues: Mitochondrial protein C2orf69 homolog (365 aa).

The transit peptide at 1–24 (MLGSRRLRSPALVLLLLRPLLASG) directs the protein to the mitochondrion. The segment at 28–64 (SRLQTRAMNPGGGERGSPEDSHRLQRSTVPGSDPQRS) is disordered. A compositionally biased stretch (polar residues) spans 53-64 (RSTVPGSDPQRS).

The protein belongs to the C2orf69 family.

The protein resides in the mitochondrion matrix. May play a role in the respiratory chain. The protein is Mitochondrial protein C2orf69 homolog of Mus musculus (Mouse).